A 356-amino-acid polypeptide reads, in one-letter code: Galectin-9C (356 aa).

The Galectin 1 domain maps to 17-148; the sequence is FSGTIQGGLQ…SVQLSYISFQ (132 aa). 82-88 contributes to the a beta-D-galactoside binding site; sequence WGPEERK. The segment at 170-190 is disordered; sequence FPPRPRGRRQKPPSVRPANPA. The Galectin 2 domain maps to 228–356; it reads FITTIPGGLY…GDIQLTHVQT (129 aa). 288–294 is an a beta-D-galactoside binding site; sequence WGSEERS.

Functionally, binds galactosides. This is Galectin-9C (LGALS9C) from Homo sapiens (Human).